Reading from the N-terminus, the 61-residue chain is Small ribosomal subunit protein uS14 (61 aa).

Zn(2+) is bound by residues cysteine 24, cysteine 27, cysteine 40, and cysteine 43.

This sequence belongs to the universal ribosomal protein uS14 family. Zinc-binding uS14 subfamily. Part of the 30S ribosomal subunit. Contacts proteins S3 and S10. It depends on Zn(2+) as a cofactor.

In terms of biological role, binds 16S rRNA, required for the assembly of 30S particles and may also be responsible for determining the conformation of the 16S rRNA at the A site. The sequence is that of Small ribosomal subunit protein uS14 from Brevibacillus brevis (strain 47 / JCM 6285 / NBRC 100599).